Consider the following 311-residue polypeptide: tRNA dimethylallyltransferase (311 aa).

11 to 18 (GPTASGKS) contacts ATP. 13–18 (TASGKS) is a substrate binding site. Interaction with substrate tRNA regions lie at residues 36–39 (DSMQ) and 160–164 (QRLIR).

Belongs to the IPP transferase family. In terms of assembly, monomer. Requires Mg(2+) as cofactor.

The enzyme catalyses adenosine(37) in tRNA + dimethylallyl diphosphate = N(6)-dimethylallyladenosine(37) in tRNA + diphosphate. In terms of biological role, catalyzes the transfer of a dimethylallyl group onto the adenine at position 37 in tRNAs that read codons beginning with uridine, leading to the formation of N6-(dimethylallyl)adenosine (i(6)A). This chain is tRNA dimethylallyltransferase, found in Rickettsia typhi (strain ATCC VR-144 / Wilmington).